Consider the following 529-residue polypeptide: DEP domain-containing protein 1B (529 aa).

The DEP domain occupies 24–108; it reads FRAKMPLRKH…DNRHLYRFPP (85 aa). A Phosphoserine modification is found at Ser160. Residues 201-393 form the Rho-GAP domain; the sequence is DSLEEVLDVK…FLMDNYQEIL (193 aa). A Phosphoserine modification is found at Ser436.

The chain is DEP domain-containing protein 1B (DEPDC1B) from Homo sapiens (Human).